The following is a 332-amino-acid chain: MKVGIIGASGYTGSELLRILANHPEAEVIAASSRRYEGQKIWKVHRFLKGFYDLEFCSPELSNFGDCDLVFTAVPHGEAMKYVPQLLDSGIKVVDISADYRLDKETYERVYGKKHEGYVEAVYGLTELHREEIKKANLVANPGCYPTGTILAASPLAKLELIERVVFDCKSGITGAGESPSAFTHYPNLHESIVPYKITEHRHYYEMVQELGRFQSDIKISFTPQVYPGSRGILTNAHVFLRGELTREELYRIYEEFYEDSFFVRIQESVSLSQVRGSNFCDISIHPGEDRVVVVSAIDNLVKGASGQAVQNMNLMMGFDETLGLRTPPLFP.

Residue Cys-144 is part of the active site.

The protein belongs to the NAGSA dehydrogenase family. Type 1 subfamily.

It localises to the cytoplasm. It catalyses the reaction N-acetyl-L-glutamate 5-semialdehyde + phosphate + NADP(+) = N-acetyl-L-glutamyl 5-phosphate + NADPH + H(+). The protein operates within amino-acid biosynthesis; L-arginine biosynthesis; N(2)-acetyl-L-ornithine from L-glutamate: step 3/4. Functionally, catalyzes the NADPH-dependent reduction of N-acetyl-5-glutamyl phosphate to yield N-acetyl-L-glutamate 5-semialdehyde. In Archaeoglobus fulgidus (strain ATCC 49558 / DSM 4304 / JCM 9628 / NBRC 100126 / VC-16), this protein is N-acetyl-gamma-glutamyl-phosphate reductase.